Reading from the N-terminus, the 343-residue chain is ATP-dependent (S)-NAD(P)H-hydrate dehydratase (343 aa).

The transit peptide at 1 to 42 (MAVHACGAAAAVVALLSAAIALQWSPLYAVLQRALSLHTAHA) directs the protein to the mitochondrion. Residues 49–340 (LFQLVRNIVP…TEVGTAFSRL (292 aa)) enclose the YjeF C-terminal domain. An N6-acetyllysine modification is found at Lys-63. Tyr-81 is modified (phosphotyrosine). Residues Gly-149 and 202 to 208 (NHVEFSR) contribute to the (6S)-NADPHX site. Phosphoserine is present on Ser-216. ATP-binding positions include 242–246 (KGEQD) and 261–270 (GSSRRCGGQG). Residue Asp-271 participates in (6S)-NADPHX binding.

It belongs to the NnrD/CARKD family. Mg(2+) serves as cofactor.

It localises to the mitochondrion. It carries out the reaction (6S)-NADHX + ATP = ADP + phosphate + NADH + H(+). The catalysed reaction is (6S)-NADPHX + ATP = ADP + phosphate + NADPH + H(+). Its function is as follows. Catalyzes the dehydration of the S-form of NAD(P)HX at the expense of ATP, which is converted to ADP. Together with NAD(P)HX epimerase, which catalyzes the epimerization of the S- and R-forms, the enzyme allows the repair of both epimers of NAD(P)HX, a damaged form of NAD(P)H that is a result of enzymatic or heat-dependent hydration. The chain is ATP-dependent (S)-NAD(P)H-hydrate dehydratase from Mus musculus (Mouse).